The chain runs to 296 residues: Acetylglutamate kinase (296 aa).

Residues 71–72 (GG), arginine 93, and asparagine 186 contribute to the substrate site.

It belongs to the acetylglutamate kinase family. ArgB subfamily.

The protein localises to the cytoplasm. It catalyses the reaction N-acetyl-L-glutamate + ATP = N-acetyl-L-glutamyl 5-phosphate + ADP. The protein operates within amino-acid biosynthesis; L-arginine biosynthesis; N(2)-acetyl-L-ornithine from L-glutamate: step 2/4. Catalyzes the ATP-dependent phosphorylation of N-acetyl-L-glutamate. The chain is Acetylglutamate kinase from Synechococcus sp. (strain RCC307).